The following is a 605-amino-acid chain: NADH-ubiquinone oxidoreductase chain 5 (605 aa).

A run of 15 helical transmembrane segments spans residues 8-28 (TLLSLLILTVPIMASNFYPYT), 34-54 (IYVKTMVSYAFLVSLIPTMIF), 87-107 (MILMPVALSVTWSIMEFSMWY), 117-137 (FFKYLLLFLITMMLLVTANNL), 140-160 (LFIGWEGVGIMSFLLIGWWYG), 171-191 (AILYNRIGDVGFLVAMAWFLF), 241-261 (TPVSALLHSSTMVVAGIFLLI), 273-293 (IQTMMLCLGAITTLFTAICAL), 301-321 (IVAFSTSSQLGLMMVTVGINQ), 324-344 (LAFLHICTHAFFKAMLFLCSG), 366-386 (LPFTTTALITGSLALTGMPFL), 409-429 (LFITLIATSLTAVYSTRIIYF), 457-477 (LLVGSIFAGFFISNNITPTTI), 482-502 (MPTYLKTTAMLVTLLGFIVAL), and 584-604 (IKLYFLSFLITLTLSLIMLNF).

The protein belongs to the complex I subunit 5 family. In terms of assembly, core subunit of respiratory chain NADH dehydrogenase (Complex I) which is composed of 45 different subunits.

The protein resides in the mitochondrion inner membrane. The catalysed reaction is a ubiquinone + NADH + 5 H(+)(in) = a ubiquinol + NAD(+) + 4 H(+)(out). Core subunit of the mitochondrial membrane respiratory chain NADH dehydrogenase (Complex I) which catalyzes electron transfer from NADH through the respiratory chain, using ubiquinone as an electron acceptor. Essential for the catalytic activity and assembly of complex I. The polypeptide is NADH-ubiquinone oxidoreductase chain 5 (MT-ND5) (Rousettus amplexicaudatus (Common rousette)).